Consider the following 241-residue polypeptide: MTRDEAKNKIIFALDVDNLKDIDCWAEKLSRKVGMFKVGKELFTSAGPAAVEAVKKHAGEVFLDLKYHDIPNTVAQAMLAAGRLGVKLANLHALGGPEMMEKASQAVRKEFSENERPRLLAVTILTSSTQDTLKAVGIEHPVEEMVVRLAKLAKESGMDGVVASPLEIEAIRAACGPDFLIVTPGVRPSFAAVDDQKRIMTPAEAVKAGADYLVIGRPIAKAADPIQAAELIVDEIVAGVQ.

Substrate contacts are provided by residues D15, K37, 64 to 73, T126, R187, Q196, G216, and R217; that span reads DLKYHDIPNT. The Proton donor role is filled by K66.

This sequence belongs to the OMP decarboxylase family. Type 1 subfamily. As to quaternary structure, homodimer.

The enzyme catalyses orotidine 5'-phosphate + H(+) = UMP + CO2. Its pathway is pyrimidine metabolism; UMP biosynthesis via de novo pathway; UMP from orotate: step 2/2. In terms of biological role, catalyzes the decarboxylation of orotidine 5'-monophosphate (OMP) to uridine 5'-monophosphate (UMP). This chain is Orotidine 5'-phosphate decarboxylase, found in Trichlorobacter lovleyi (strain ATCC BAA-1151 / DSM 17278 / SZ) (Geobacter lovleyi).